The following is a 426-amino-acid chain: Serine--tRNA ligase (426 aa).

An L-serine-binding site is contributed by 233 to 235 (TSE). 264 to 266 (RAE) contributes to the ATP binding site. Residue E287 coordinates L-serine. Residue 351–354 (EISS) coordinates ATP. Residue S387 participates in L-serine binding.

It belongs to the class-II aminoacyl-tRNA synthetase family. Type-1 seryl-tRNA synthetase subfamily. Homodimer. The tRNA molecule binds across the dimer.

It is found in the cytoplasm. It catalyses the reaction tRNA(Ser) + L-serine + ATP = L-seryl-tRNA(Ser) + AMP + diphosphate + H(+). The enzyme catalyses tRNA(Sec) + L-serine + ATP = L-seryl-tRNA(Sec) + AMP + diphosphate + H(+). It participates in aminoacyl-tRNA biosynthesis; selenocysteinyl-tRNA(Sec) biosynthesis; L-seryl-tRNA(Sec) from L-serine and tRNA(Sec): step 1/1. Functionally, catalyzes the attachment of serine to tRNA(Ser). Is also able to aminoacylate tRNA(Sec) with serine, to form the misacylated tRNA L-seryl-tRNA(Sec), which will be further converted into selenocysteinyl-tRNA(Sec). The chain is Serine--tRNA ligase from Stenotrophomonas maltophilia (strain R551-3).